The chain runs to 373 residues: DNA replication and repair protein RecF (373 aa).

30–37 (GANGSGKT) provides a ligand contact to ATP.

Belongs to the RecF family.

Its subcellular location is the cytoplasm. Functionally, the RecF protein is involved in DNA metabolism; it is required for DNA replication and normal SOS inducibility. RecF binds preferentially to single-stranded, linear DNA. It also seems to bind ATP. This Marinobacter nauticus (strain ATCC 700491 / DSM 11845 / VT8) (Marinobacter aquaeolei) protein is DNA replication and repair protein RecF.